The chain runs to 67 residues: Bombesin (67 aa).

A signal peptide spans 1–30 (MSLLPAVKVLPLGYLGIVLVFSLILRSAMV). Positions 31 to 49 (DFIQDAGKLERIDTYKREA) are excised as a propeptide. At Gln50 the chain carries Pyrrolidone carboxylic acid. Residue Met64 is modified to Methionine amide.

The protein belongs to the bombesin/neuromedin-B/ranatensin family. In terms of tissue distribution, expressed by the skin dorsal glands.

It localises to the secreted. Its function is as follows. Stimulates smooth muscle contraction in isolated rat stomach strip. The protein is Bombesin of Sanguirana varians (Palawan frog).